A 149-amino-acid polypeptide reads, in one-letter code: Putative glycine cleavage system H protein 3 (149 aa).

The 83-residue stretch at 39–121 (TCTLGITKYA…EDKGWLIKME (83 aa)) folds into the Lipoyl-binding domain. Position 80 is an N6-lipoyllysine (Lys80).

This sequence belongs to the GcvH family. In terms of assembly, the glycine cleavage system is composed of four proteins: P, T, L and H. It depends on (R)-lipoate as a cofactor.

Functionally, the glycine cleavage system catalyzes the degradation of glycine. The H protein shuttles the methylamine group of glycine from the P protein to the T protein. This Dictyostelium discoideum (Social amoeba) protein is Putative glycine cleavage system H protein 3 (gcvH3).